The chain runs to 621 residues: Alpha-actinin-like protein 1 (621 aa).

2 Calponin-homology (CH) domains span residues 8–114 (SVQN…LRFT) and 123–230 (LTAK…HAFS). The segment at 86–110 (LTNIGPADIVDGNLKLILGLIWTLI) is actin-binding. 3 EF-hand domains span residues 388–419 (LSTI…LGPL), 487–549 (DGIT…EIVM), and 550–618 (EELE…AEDK).

The protein belongs to the alpha-actinin family.

It localises to the cytoplasm. The protein resides in the cytoskeleton. Functionally, binds to actin and is involved in actin-ring formation and organization. Plays a role in cytokinesis and is involved in septation. The chain is Alpha-actinin-like protein 1 (ain1) from Schizosaccharomyces pombe (strain 972 / ATCC 24843) (Fission yeast).